Here is a 113-residue protein sequence, read N- to C-terminus: MSQEIYDYANQLERAVRALPEYQKVLEVKEAIQADASASELFDEFVAMQEKIQEMMQSGQMPTAEEQTSIQELSQKIEANDQLKAYFEAQQALSVYMSDIERIVFAPLKDLVK.

The protein belongs to the UPF0342 family.

This is UPF0342 protein MGAS10750_Spy0713 from Streptococcus pyogenes serotype M4 (strain MGAS10750).